The chain runs to 59 residues: Large ribosomal subunit protein bL33 (59 aa).

The protein belongs to the bacterial ribosomal protein bL33 family.

The protein is Large ribosomal subunit protein bL33 of Prosthecochloris aestuarii (strain DSM 271 / SK 413).